The primary structure comprises 371 residues: Peptide chain release factor 2 (371 aa).

Gln-253 is subject to N5-methylglutamine.

This sequence belongs to the prokaryotic/mitochondrial release factor family. In terms of processing, methylated by PrmC. Methylation increases the termination efficiency of RF2.

It localises to the cytoplasm. Its function is as follows. Peptide chain release factor 2 directs the termination of translation in response to the peptide chain termination codons UGA and UAA. This is Peptide chain release factor 2 from Mycobacterium marinum (strain ATCC BAA-535 / M).